The chain runs to 734 residues: Photosystem I P700 chlorophyll a apoprotein A2 (734 aa).

A run of 8 helical transmembrane segments spans residues 46–69 (IFASHFGQLAVIFLWTSGNLFHVA), 135–158 (LYQGALFLLGLAAVSLAAGWLHLQ), 175–199 (LNHHLSGLFGVSSLAWSGHLVHVAI), 273–291 (IAHHHLAIAVLFIIAGHQY), 330–353 (LHFQLGLALASLGVITSLVAQHMY), 369–395 (AALYTHHQYIAGFIMSGAFAHGAIFFI), 417–439 (AIISHLSWASLFLGFHTLGLYVH), and 517–535 (FLVHHAIALGLHTTTLILV). [4Fe-4S] cluster is bound by residues C559 and C568. A run of 2 helical transmembrane segments spans residues 575 to 596 (AFYLAIFWMLNTIGWVTFYWHW) and 643 to 665 (LSVWAWMFLFGHLIWATGFMFLI). The chlorophyll a site is built by H654, M662, and Y670. W671 contacts phylloquinone. Residues 707-727 (LVGLAHFSVGYIFTYAAFLIA) form a helical membrane-spanning segment.

This sequence belongs to the PsaA/PsaB family. The PsaA/B heterodimer binds the P700 chlorophyll special pair and subsequent electron acceptors. PSI consists of a core antenna complex that captures photons, and an electron transfer chain that converts photonic excitation into a charge separation. The eukaryotic PSI reaction center is composed of at least 11 subunits. Requires P700 is a chlorophyll a/chlorophyll a' dimer, A0 is one or more chlorophyll a, A1 is one or both phylloquinones and FX is a shared 4Fe-4S iron-sulfur center. as cofactor.

The protein localises to the plastid. The protein resides in the chloroplast thylakoid membrane. It carries out the reaction reduced [plastocyanin] + hnu + oxidized [2Fe-2S]-[ferredoxin] = oxidized [plastocyanin] + reduced [2Fe-2S]-[ferredoxin]. In terms of biological role, psaA and PsaB bind P700, the primary electron donor of photosystem I (PSI), as well as the electron acceptors A0, A1 and FX. PSI is a plastocyanin-ferredoxin oxidoreductase, converting photonic excitation into a charge separation, which transfers an electron from the donor P700 chlorophyll pair to the spectroscopically characterized acceptors A0, A1, FX, FA and FB in turn. Oxidized P700 is reduced on the lumenal side of the thylakoid membrane by plastocyanin. In Chaetosphaeridium globosum (Charophycean green alga), this protein is Photosystem I P700 chlorophyll a apoprotein A2.